Reading from the N-terminus, the 197-residue chain is Holliday junction branch migration complex subunit RuvA (197 aa).

The domain I stretch occupies residues 1–63 (MYDYIKGNLT…EDAHLLYGFH (63 aa)). Residues 64–142 (TEDEKAVFLN…DINEVSTDKS (79 aa)) are domain II. The segment at 143–147 (KVSTI) is flexible linker. The domain III stretch occupies residues 148 to 197 (NNNQELEEAVEALLALGYKTNELKKIEKFFEGTTDTAENYIKSALKMLMK).

This sequence belongs to the RuvA family. As to quaternary structure, homotetramer. Forms an RuvA(8)-RuvB(12)-Holliday junction (HJ) complex. HJ DNA is sandwiched between 2 RuvA tetramers; dsDNA enters through RuvA and exits via RuvB. An RuvB hexamer assembles on each DNA strand where it exits the tetramer. Each RuvB hexamer is contacted by two RuvA subunits (via domain III) on 2 adjacent RuvB subunits; this complex drives branch migration. In the full resolvosome a probable DNA-RuvA(4)-RuvB(12)-RuvC(2) complex forms which resolves the HJ.

Its subcellular location is the cytoplasm. The RuvA-RuvB-RuvC complex processes Holliday junction (HJ) DNA during genetic recombination and DNA repair, while the RuvA-RuvB complex plays an important role in the rescue of blocked DNA replication forks via replication fork reversal (RFR). RuvA specifically binds to HJ cruciform DNA, conferring on it an open structure. The RuvB hexamer acts as an ATP-dependent pump, pulling dsDNA into and through the RuvAB complex. HJ branch migration allows RuvC to scan DNA until it finds its consensus sequence, where it cleaves and resolves the cruciform DNA. In Streptococcus mutans serotype c (strain ATCC 700610 / UA159), this protein is Holliday junction branch migration complex subunit RuvA.